Consider the following 221-residue polypeptide: Penicillin-binding protein activator LpoB (221 aa).

Residues 1-20 form the signal peptide; the sequence is MLNRMYRYALLATVALALSG. A lipid anchor (N-palmitoyl cysteine) is attached at Cys21. A lipid anchor (S-diacylglycerol cysteine) is attached at Cys21. The interval 29–82 is disordered; that stretch reads PAPVEEAQPGTQQPTQPVPPPTQPVPTVPSVPSIPAQPGPIEHQPENATPEPKA. Positions 44–57 are enriched in pro residues; it reads QPVPPPTQPVPTVP.

The protein belongs to the LpoB family. Interacts with PBP1b.

It is found in the cell outer membrane. In terms of biological role, regulator of peptidoglycan synthesis that is essential for the function of penicillin-binding protein 1B (PBP1b). This is Penicillin-binding protein activator LpoB from Cronobacter turicensis (strain DSM 18703 / CCUG 55852 / LMG 23827 / z3032).